The following is a 175-amino-acid chain: Large ribosomal subunit protein uL10 (175 aa).

Belongs to the universal ribosomal protein uL10 family. In terms of assembly, part of the ribosomal stalk of the 50S ribosomal subunit. The N-terminus interacts with L11 and the large rRNA to form the base of the stalk. The C-terminus forms an elongated spine to which L12 dimers bind in a sequential fashion forming a multimeric L10(L12)X complex.

In terms of biological role, forms part of the ribosomal stalk, playing a central role in the interaction of the ribosome with GTP-bound translation factors. The polypeptide is Large ribosomal subunit protein uL10 (Synechococcus sp. (strain CC9311)).